The following is a 403-amino-acid chain: Phosphopentomutase (403 aa).

Residues aspartate 13, aspartate 298, histidine 303, aspartate 339, histidine 340, and histidine 351 each contribute to the Mn(2+) site.

Belongs to the phosphopentomutase family. Requires Mn(2+) as cofactor.

Its subcellular location is the cytoplasm. The catalysed reaction is 2-deoxy-alpha-D-ribose 1-phosphate = 2-deoxy-D-ribose 5-phosphate. The enzyme catalyses alpha-D-ribose 1-phosphate = D-ribose 5-phosphate. It functions in the pathway carbohydrate degradation; 2-deoxy-D-ribose 1-phosphate degradation; D-glyceraldehyde 3-phosphate and acetaldehyde from 2-deoxy-alpha-D-ribose 1-phosphate: step 1/2. Functionally, isomerase that catalyzes the conversion of deoxy-ribose 1-phosphate (dRib-1-P) and ribose 1-phosphate (Rib-1-P) to deoxy-ribose 5-phosphate (dRib-5-P) and ribose 5-phosphate (Rib-5-P), respectively. This is Phosphopentomutase from Streptococcus thermophilus (strain ATCC BAA-250 / LMG 18311).